The chain runs to 228 residues: uncharacterized protein (228 aa).

S-adenosyl-L-methionine is bound by residues 77–79 (TTA), Gly-113, Val-133, and 140–142 (PSL).

Belongs to the class IV-like SAM-binding methyltransferase superfamily. RNA methyltransferase TrmH family.

This is an uncharacterized protein from Escherichia coli (strain K12).